A 931-amino-acid polypeptide reads, in one-letter code: MLGGLARKLFGSANDRRVKGYRPRVQAINALEPELEALSDEALRARTEDFRRQLAEGKTLDDLLVPAFATVREGAKRALGMRPFDVQLIGGMVMHEAGIAEMKTGEGKTLVATLPVYLNALAGKGVHVVTVNDYLAKRDAEWMGRLYRFLGLTTGIIVHGLDDDERRVAYASDVTYATNNELGFDYLRDNMKYERGQMVQRPHFYAIVDEVDSILIDEARTPLIISGPLDDRSDFYNTIDTYIPRLGKEDYEVDEKQRSVSMTEAGMEKMEQMLSAAGVLKSASLYDIENVSVVHHVNQALRAHTLFQRDKDYIVRNDEVVIIDEFTGRMMPGRRYSEGLHQALEAKERVQVQPENQTLASITFQNYFRLYEKLSGMTGTANTEAAEFADIYKLEVVEIPTNVQISRIDDDDEVYRTAGEKYAAIIELIKECAERSQPVLVGTTSIEKSELLAELLKQAGFRQKDFSDPTAFNGRELLINDRSGKSFAVLNARYHEQEAYIVSQAGVPGAITIATNMAGRGTDIKLGGSADMRIEIELKDLPEGAERAAAEAKIRAEVEELKQKALEAGGLYVLGTERHESRRIDNQLRGRSGRQGDPGHSKFFLSLDDDLMRIFGSDRLDGMLQRLGLKEGEAIIHPWINKALEKAQQKVEARNYDMRKNVLKYDDVLNDQRKVVFEQRVELMNDEDVAETVEDMRHALITETVAKFIPENAYPEQWDVDGLDTALKEMLALDLPVKDWAKEEGIAGPEVTERIIRRADELMAAKTAQYGPDIMRYVEKSILLQTLDHLWREHIGMLDHLRQVVGLRGYAQRDPLNEYKSEAFNLFSALLNRLREVVTAQLMRVEIVTQQPPPEELPPMEAHHADPFTGEDELAFAGAALGSRPQPLLSGDLAVAERDPNDPESWGKVGRNEACPCGSGKKYKHCHGRFA.

Residues glutamine 87, 105–109 (GEGKT), and aspartate 523 contribute to the ATP site. Residues cysteine 915, cysteine 917, cysteine 926, and histidine 927 each coordinate Zn(2+).

It belongs to the SecA family. Monomer and homodimer. Part of the essential Sec protein translocation apparatus which comprises SecA, SecYEG and auxiliary proteins SecDF-YajC and YidC. It depends on Zn(2+) as a cofactor.

The protein localises to the cell inner membrane. It is found in the cytoplasm. It catalyses the reaction ATP + H2O + cellular proteinSide 1 = ADP + phosphate + cellular proteinSide 2.. Its function is as follows. Part of the Sec protein translocase complex. Interacts with the SecYEG preprotein conducting channel. Has a central role in coupling the hydrolysis of ATP to the transfer of proteins into and across the cell membrane, serving both as a receptor for the preprotein-SecB complex and as an ATP-driven molecular motor driving the stepwise translocation of polypeptide chains across the membrane. This chain is Protein translocase subunit SecA, found in Xanthobacter autotrophicus (strain ATCC BAA-1158 / Py2).